The following is a 352-amino-acid chain: MAATKRKRRGDLEVQAKKPKKNRKDAGQPAKQADVAKEAEEEKDRIPGPVCKGKWKNKERILIFSSRGINFRTRHLMQDLRMLMPHSKADTKMDRKDKLFVINEVCEMKNCNKCIYFEAKKKQDLYMWLSNSPHGPSAKFLVQNIHTLAELKMTGNCLKGSRPLLSFDPAFDDLPHYALLKEFLIQIFSTPRYHPKSQPFVDHVFTFTILDNRIWFRNFQIIEEDAALVEIGPRFVLNLIKIFQGSFGGPTLYENPHYQSPNMHRRVVRSITAAKYREKQQVKDVQKSRKKEPKTILPHDPTADVFVTPAEEKPIEVQWVKPEPKVDLKARKRRIYKRHRKLQQKMSRGGAK.

Positions 1–47 are disordered; it reads MAATKRKRRGDLEVQAKKPKKNRKDAGQPAKQADVAKEAEEEKDRIP. Over residues 34–46 the composition is skewed to basic and acidic residues; the sequence is DVAKEAEEEKDRI. The region spanning 59 to 248 is the Brix domain; that stretch reads ERILIFSSRG…LIKIFQGSFG (190 aa). Lys-159 participates in a covalent cross-link: Glycyl lysine isopeptide (Lys-Gly) (interchain with G-Cter in SUMO2). Ser-260 bears the Phosphoserine mark. The residue at position 275 (Lys-275) is an N6-acetyllysine. Residues 281–301 are disordered; the sequence is QVKDVQKSRKKEPKTILPHDP. Residues Lys-313 and Lys-321 each participate in a glycyl lysine isopeptide (Lys-Gly) (interchain with G-Cter in SUMO2) cross-link.

This sequence belongs to the BRX1 family.

Its subcellular location is the nucleus. The protein resides in the nucleolus. Required for biogenesis of the 60S ribosomal subunit. The polypeptide is Ribosome biogenesis protein BRX1 homolog (Brix1) (Rattus norvegicus (Rat)).